The sequence spans 366 residues: Probable methyltransferase-like protein 24 (366 aa).

The first 29 residues, methionine 1–leucine 29, serve as a signal peptide directing secretion. Positions alanine 36–tryptophan 110 are disordered. A compositionally biased stretch (pro residues) spans serine 44–glycine 63. The span at threonine 91–arginine 100 shows a compositional bias: low complexity.

Belongs to the methyltransferase superfamily.

It is found in the secreted. Functionally, probable methyltransferase. The polypeptide is Probable methyltransferase-like protein 24 (METTL24) (Homo sapiens (Human)).